We begin with the raw amino-acid sequence, 83 residues long: Short neurotoxin 3FTx-Oxy4 (83 aa).

Residues 1 to 21 (MKTLLLTLVVVTIVCLDLGYT) form the signal peptide. 4 disulfide bridges follow: cysteine 24/cysteine 45, cysteine 38/cysteine 62, cysteine 64/cysteine 75, and cysteine 76/cysteine 81.

Belongs to the three-finger toxin family. Short-chain subfamily. Type I alpha-neurotoxin sub-subfamily. In terms of tissue distribution, expressed by the venom gland.

Its subcellular location is the secreted. In terms of biological role, binds to muscle nicotinic acetylcholine receptor (nAChR) and inhibit acetylcholine from binding to the receptor, thereby impairing neuromuscular transmission. The protein is Short neurotoxin 3FTx-Oxy4 of Oxyuranus microlepidotus (Inland taipan).